A 475-amino-acid chain; its full sequence is Methyltransferase-like protein 25B (475 aa).

A coiled-coil region spans residues 186-210 (QRLVERAQRLDQELLQTLEKEEKRN). A helical transmembrane segment spans residues 406-426 (VVAFFSLALLLAPLVETLILL).

Belongs to the METTL25 family.

The protein localises to the membrane. The chain is Methyltransferase-like protein 25B from Bos taurus (Bovine).